Consider the following 100-residue polypeptide: Protein translation factor SUI1 homolog (100 aa).

Belongs to the SUI1 family.

The polypeptide is Protein translation factor SUI1 homolog (Sulfurisphaera tokodaii (strain DSM 16993 / JCM 10545 / NBRC 100140 / 7) (Sulfolobus tokodaii)).